A 125-amino-acid polypeptide reads, in one-letter code: Small ribosomal subunit protein uS12 (125 aa).

Residues 1–27 are disordered; sequence MPTINQLVRKGREKGEQKSTAPALKSC. A 3-methylthioaspartic acid modification is found at D89. The disordered stretch occupies residues 103 to 125; sequence DASGVQKRNQGRSKYGTKRPKKK. Residues 111–125 are compositionally biased toward basic residues; that stretch reads NQGRSKYGTKRPKKK.

The protein belongs to the universal ribosomal protein uS12 family. As to quaternary structure, part of the 30S ribosomal subunit. Contacts proteins S8 and S17. May interact with IF1 in the 30S initiation complex.

Functionally, with S4 and S5 plays an important role in translational accuracy. Interacts with and stabilizes bases of the 16S rRNA that are involved in tRNA selection in the A site and with the mRNA backbone. Located at the interface of the 30S and 50S subunits, it traverses the body of the 30S subunit contacting proteins on the other side and probably holding the rRNA structure together. The combined cluster of proteins S8, S12 and S17 appears to hold together the shoulder and platform of the 30S subunit. The sequence is that of Small ribosomal subunit protein uS12 from Syntrophomonas wolfei subsp. wolfei (strain DSM 2245B / Goettingen).